The primary structure comprises 637 residues: Chaperone protein DnaK (637 aa).

The residue at position 198 (Thr198) is a Phosphothreonine; by autocatalysis. Positions 601–615 (AQQKAQAEQAGADAG) are enriched in low complexity. Residues 601-637 (AQQKAQAEQAGADAGEQPKQDDDVVDAEFEEVKEDKK) form a disordered region. The segment covering 623–637 (DVVDAEFEEVKEDKK) has biased composition (acidic residues).

It belongs to the heat shock protein 70 family.

Its function is as follows. Acts as a chaperone. The sequence is that of Chaperone protein DnaK from Vibrio atlanticus (strain LGP32) (Vibrio splendidus (strain Mel32)).